The sequence spans 193 residues: Peptidyl-tRNA hydrolase (193 aa).

Position 17 (Tyr17) interacts with tRNA. Residue His22 is the Proton acceptor of the active site. Residues Tyr68, Asn70, and Asn116 each coordinate tRNA.

Belongs to the PTH family. As to quaternary structure, monomer.

The protein resides in the cytoplasm. The enzyme catalyses an N-acyl-L-alpha-aminoacyl-tRNA + H2O = an N-acyl-L-amino acid + a tRNA + H(+). In terms of biological role, hydrolyzes ribosome-free peptidyl-tRNAs (with 1 or more amino acids incorporated), which drop off the ribosome during protein synthesis, or as a result of ribosome stalling. Functionally, catalyzes the release of premature peptidyl moieties from peptidyl-tRNA molecules trapped in stalled 50S ribosomal subunits, and thus maintains levels of free tRNAs and 50S ribosomes. The protein is Peptidyl-tRNA hydrolase of Acinetobacter baumannii (strain AB307-0294).